Consider the following 424-residue polypeptide: MASMPPTPEAQGPILFEDLAVYFSQEECVTLHPAQRSLSKDGTKESLEDAALMGEEGKPEINQQLSLESMELDELALEKYPIAAPLVPYPEKSSEDGVGNPEAKILSGTPTYKRRVISLLVTIENHTPLVELSEYLGTNTLSEILDSPWEGAKNVYKCPECDQNFSDHSYLVLHQKIHSGEKKHKCGDCGKIFNHRANLRTHRRIHTGEKPYKCAKCSASFRQHSHLSRHMNSHVKEKPYTCSICGRGFMWLPGLAQHQKSHSAENTYESTNCDKHFNEKPNLALPEETFVSGPQYQHTKCMKSFRQSLYPALSEKSHDEDSERCSDDGDNFFSFSKFKPLQCPDCDMTFPCFSELISHQNIHTEERPHKCKTCEESFALDSELACHQKSHMLAEPFKCTVCGKTFKSNLHLITHKRTHIKNTT.

The KRAB domain maps to 14 to 88 (ILFEDLAVYF…KYPIAAPLVP (75 aa)). 4 C2H2-type zinc fingers span residues 156-178 (YKCP…QKIH), 184-206 (HKCG…RRIH), 212-234 (YKCA…MNSH), and 240-262 (YTCS…QKSH). A Glycyl lysine isopeptide (Lys-Gly) (interchain with G-Cter in SUMO2) cross-link involves residue Lys-300. C2H2-type zinc fingers lie at residues 341-363 (LQCP…QNIH), 369-391 (HKCK…QKSH), and 397-419 (FKCT…KRTH).

The protein belongs to the krueppel C2H2-type zinc-finger protein family.

It is found in the nucleus. Its function is as follows. May be involved in transcriptional regulation. The polypeptide is Zinc finger protein 597 (ZNF597) (Homo sapiens (Human)).